We begin with the raw amino-acid sequence, 636 residues long: Chaperone protein HtpG (636 aa).

The segment at methionine 1–arginine 344 is a; substrate-binding. Positions glutamate 345–glutamine 561 are b. The interval leucine 562–alanine 636 is c.

The protein belongs to the heat shock protein 90 family. In terms of assembly, homodimer.

Its subcellular location is the cytoplasm. Its function is as follows. Molecular chaperone. Has ATPase activity. The chain is Chaperone protein HtpG from Xylella fastidiosa (strain Temecula1 / ATCC 700964).